The following is a 673-amino-acid chain: UvrABC system protein B (673 aa).

The region spanning 29-188 (EGLNDGLAHQ…LAELQYTRND (160 aa)) is the Helicase ATP-binding domain. 42–49 (GVTGSGKT) contributes to the ATP binding site. Residues 95-118 (YYDYYQPEAYVPSSDTFIEKDASI) carry the Beta-hairpin motif. The region spanning 434 to 600 (QVDDVLSEIH…ALNKKVGELL (167 aa)) is the Helicase C-terminal domain. The tract at residues 607-632 (KPKRGKQAVKVEEKSANTYKPKSRKE) is disordered. The UVR domain occupies 634 to 669 (EKELKQLEQQMRDFAKDLEFEKAAAVRDKIGQLKAV).

This sequence belongs to the UvrB family. As to quaternary structure, forms a heterotetramer with UvrA during the search for lesions. Interacts with UvrC in an incision complex.

It localises to the cytoplasm. The UvrABC repair system catalyzes the recognition and processing of DNA lesions. A damage recognition complex composed of 2 UvrA and 2 UvrB subunits scans DNA for abnormalities. Upon binding of the UvrA(2)B(2) complex to a putative damaged site, the DNA wraps around one UvrB monomer. DNA wrap is dependent on ATP binding by UvrB and probably causes local melting of the DNA helix, facilitating insertion of UvrB beta-hairpin between the DNA strands. Then UvrB probes one DNA strand for the presence of a lesion. If a lesion is found the UvrA subunits dissociate and the UvrB-DNA preincision complex is formed. This complex is subsequently bound by UvrC and the second UvrB is released. If no lesion is found, the DNA wraps around the other UvrB subunit that will check the other stand for damage. The chain is UvrABC system protein B from Actinobacillus pleuropneumoniae serotype 5b (strain L20).